Consider the following 329-residue polypeptide: Dolichyl-diphosphooligosaccharide--protein glycosyltransferase subunit MAGT1 (329 aa).

An N-terminal signal peptide occupies residues Met-1–Gly-23. The Extracellular portion of the chain corresponds to Gln-24–Pro-178. The region spanning Trp-41–Asp-169 is the Thioredoxin domain. A glycan (N-linked (GlcNAc...) asparagine) is linked at Asn-65. Cys-81 and Cys-84 are disulfide-bonded. Residues Asn-179 to Leu-199 form a helical membrane-spanning segment. At Arg-200–Gly-212 the chain is on the cytoplasmic side. The chain crosses the membrane as a helical span at residues Trp-213–Ile-233. Residues Arg-234–Gln-258 lie on the Extracellular side of the membrane. The helical transmembrane segment at Phe-259 to Leu-279 threads the bilayer. The Cytoplasmic segment spans residues Leu-280–Lys-294. A helical membrane pass occupies residues Ile-295–Phe-315. The Extracellular portion of the chain corresponds to Arg-316–Thr-329.

The protein belongs to the OST3/OST6 family. As to quaternary structure, accessory component of the STT3B-containing form of the oligosaccharyltransferase (OST) complex.

The protein localises to the cell membrane. Its subcellular location is the endoplasmic reticulum. It is found in the endoplasmic reticulum membrane. Its pathway is protein modification; protein glycosylation. Functionally, accessory component of the STT3B-containing form of the N-oligosaccharyl transferase (OST) complex which catalyzes the transfer of a high mannose oligosaccharide from a lipid-linked oligosaccharide donor to an asparagine residue within an Asn-X-Ser/Thr consensus motif in nascent polypeptide chains. May be involved in substrate-specific N-glycosylation involving acceptor sites that are near cysteine residues. Could indirectly play a role in Mg(2+) transport in epithelial cells. The chain is Dolichyl-diphosphooligosaccharide--protein glycosyltransferase subunit MAGT1 from Xenopus laevis (African clawed frog).